Here is a 392-residue protein sequence, read N- to C-terminus: Phospho-N-acetylmuramoyl-pentapeptide-transferase (392 aa).

10 helical membrane passes run Ala-29–Arg-49, Thr-76–Leu-96, Phe-100–Trp-120, Tyr-137–Glu-157, Ile-193–Ser-213, Gly-225–Thr-245, Ser-262–Phe-282, Val-289–Ile-309, Ile-314–Val-334, and Gln-369–Leu-389.

Belongs to the glycosyltransferase 4 family. MraY subfamily. The cofactor is Mg(2+).

Its subcellular location is the cell inner membrane. The enzyme catalyses UDP-N-acetyl-alpha-D-muramoyl-L-alanyl-gamma-D-glutamyl-meso-2,6-diaminopimeloyl-D-alanyl-D-alanine + di-trans,octa-cis-undecaprenyl phosphate = di-trans,octa-cis-undecaprenyl diphospho-N-acetyl-alpha-D-muramoyl-L-alanyl-D-glutamyl-meso-2,6-diaminopimeloyl-D-alanyl-D-alanine + UMP. It functions in the pathway cell wall biogenesis; peptidoglycan biosynthesis. Functionally, catalyzes the initial step of the lipid cycle reactions in the biosynthesis of the cell wall peptidoglycan: transfers peptidoglycan precursor phospho-MurNAc-pentapeptide from UDP-MurNAc-pentapeptide onto the lipid carrier undecaprenyl phosphate, yielding undecaprenyl-pyrophosphoryl-MurNAc-pentapeptide, known as lipid I. The polypeptide is Phospho-N-acetylmuramoyl-pentapeptide-transferase (Polaromonas sp. (strain JS666 / ATCC BAA-500)).